Consider the following 513-residue polypeptide: MQLNSTEISELIKQRIAQFNVVSEAHNEGTIVSVSDGVIRIHGLADCMQGEMISLPGNRYAIALNLERDSVGAVVMGPYADLAEGMKVKCTGRILEVPVGRGLLGRVVNTLGAPIDGKGPLDHDGFSAVEAIAPGVIERQSVDQPVQTGYKAVDSMIPIGRGQRELIIGDRQTGKTALAIDAIINQRDSGIKCIYVAIGQKASTISNVVRKLEEHGALANTIVVVATASESAALQYLAPYAGCAMGEYFRDRGEDALIIYDDLSKQAVAYRQISLLLRRPPGREAFPGDVFYLHSRLLERAARVNAEYVEAFTKGEVKGKTGSLTALPIIETQAGDVSAFVPTNVISITDGQIFLETNLFNAGIRPAVNPGISVSRVGGAAQTKIMKKLSGGIRTALAQYRELAAFSQFASDLDDATRKQLDHGQKVTELLKQKQYAPMSVAQQSLVLFAAERGYLADVELSKIGSFEAALLAYVDRDHAPLMQEINQTGGYNDEIEGKLKGILDSFKATQSW.

169–176 (GDRQTGKT) provides a ligand contact to ATP.

The protein belongs to the ATPase alpha/beta chains family. F-type ATPases have 2 components, CF(1) - the catalytic core - and CF(0) - the membrane proton channel. CF(1) has five subunits: alpha(3), beta(3), gamma(1), delta(1), epsilon(1). CF(0) has three main subunits: a(1), b(2) and c(9-12). The alpha and beta chains form an alternating ring which encloses part of the gamma chain. CF(1) is attached to CF(0) by a central stalk formed by the gamma and epsilon chains, while a peripheral stalk is formed by the delta and b chains.

Its subcellular location is the cell inner membrane. The enzyme catalyses ATP + H2O + 4 H(+)(in) = ADP + phosphate + 5 H(+)(out). Its function is as follows. Produces ATP from ADP in the presence of a proton gradient across the membrane. The alpha chain is a regulatory subunit. The polypeptide is ATP synthase subunit alpha (Escherichia coli O81 (strain ED1a)).